The following is a 217-amino-acid chain: Non-structural protein NS3 (217 aa).

This sequence belongs to the orbivirus NS3 family.

Its function is as follows. May play a role in the release of virions from infected cells. The polypeptide is Non-structural protein NS3 (Segment-10) (Camelus dromedarius (Dromedary)).